The sequence spans 394 residues: 1-deoxy-D-xylulose 5-phosphate reductoisomerase (394 aa).

Threonine 6, glycine 7, serine 8, isoleucine 9, alanine 32, and asparagine 124 together coordinate NADPH. Lysine 125 is a 1-deoxy-D-xylulose 5-phosphate binding site. Position 126 (glutamate 126) interacts with NADPH. Aspartate 148 provides a ligand contact to Mn(2+). 4 residues coordinate 1-deoxy-D-xylulose 5-phosphate: serine 149, glutamate 150, serine 174, and histidine 197. Residue glutamate 150 coordinates Mn(2+). Glycine 203 is an NADPH binding site. Residues serine 210, asparagine 215, lysine 216, and glutamate 219 each coordinate 1-deoxy-D-xylulose 5-phosphate. Glutamate 219 serves as a coordination point for Mn(2+).

The protein belongs to the DXR family. It depends on Mg(2+) as a cofactor. Mn(2+) is required as a cofactor.

It catalyses the reaction 2-C-methyl-D-erythritol 4-phosphate + NADP(+) = 1-deoxy-D-xylulose 5-phosphate + NADPH + H(+). It functions in the pathway isoprenoid biosynthesis; isopentenyl diphosphate biosynthesis via DXP pathway; isopentenyl diphosphate from 1-deoxy-D-xylulose 5-phosphate: step 1/6. Catalyzes the NADPH-dependent rearrangement and reduction of 1-deoxy-D-xylulose-5-phosphate (DXP) to 2-C-methyl-D-erythritol 4-phosphate (MEP). This Streptomyces avermitilis (strain ATCC 31267 / DSM 46492 / JCM 5070 / NBRC 14893 / NCIMB 12804 / NRRL 8165 / MA-4680) protein is 1-deoxy-D-xylulose 5-phosphate reductoisomerase.